Consider the following 332-residue polypeptide: N-arachidonyl glycine receptor (332 aa).

Residues 1 to 26 (MTTPHSQAQPGLPIDPHPDEYKVAAL) lie on the Extracellular side of the membrane. The chain crosses the membrane as a helical span at residues 27-47 (VFYSCIFIIGLFVNVTALWVF). Over 48-56 (SCTTKKRTT) the chain is Cytoplasmic. The helical transmembrane segment at 57–77 (VTVYMMNVALLDLVFIMSLPF) threads the bilayer. Residues 78–95 (RMLYYAKGEWPFGEYFCR) lie on the Extracellular side of the membrane. An intrachain disulfide couples Cys-94 to Cys-173. The chain crosses the membrane as a helical span at residues 96 to 116 (ILGALTVFYPSIALWLLAFIS). The Cytoplasmic portion of the chain corresponds to 117-138 (ADRYMAIVQPKYAKELKNTCKA). A helical transmembrane segment spans residues 139–159 (VMACVGVWIMTLTTTIPLLLL). Topologically, residues 160–192 (YEDPDTASSTPPTCLKISDIIYLKAINALNFTR) are extracellular. Asn-189 carries N-linked (GlcNAc...) asparagine glycosylation. Residues 193–213 (LIFFFLIPLFIMIGCYLVIIH) traverse the membrane as a helical segment. The Cytoplasmic portion of the chain corresponds to 214–233 (SLLHGKTSKLKPKVKEKSIR). The helical transmembrane segment at 234–254 (IIITLMVQVLVCFMPFHICFA) threads the bilayer. The Extracellular segment spans residues 255–269 (FLMLGGDENSYNPWG). The helical transmembrane segment at 270-290 (AFTTFLMNLSTCLDVILYYIV) threads the bilayer. Over 291 to 332 (SKQFQARVISVMLYRNYLRSVRRKSFRSGSLRSLSNINSEML) the chain is Cytoplasmic. Ser-323 carries the phosphoserine modification.

It belongs to the G-protein coupled receptor 1 family.

The protein localises to the cell membrane. It is found in the cytoplasmic vesicle membrane. Its function is as follows. G protein-coupled receptor (GPCR) that plays a role in diverse physiological processes particularly within the immune and nervous systems. Becomes active when triggered by various endogenous ligands including endocannabinoid N-arachidonyl glycine (NAGly), delta-9-tetrahydrocannabinol or resolvin D2/RvD2 derived from the omega-3 fatty acid docosahexaenoic acid (DHA). Upon RvD2 binding, facilitates the resolution of inflammation, aiding in tissue repair and homeostasis. Mechanistically, RvD2 ligation initiates Galphas protein coupling, activation of cAMP-PKA signaling pathway and phosphorylation of STAT3, leading to RvD2-stimulated macrophage phagocytosis. Mediates NAGly-induced process of reorganization of actin filaments and induction of acrosomal exocytosis. Activation by N-arachidonoyl glycine (NAGly) can also induce apoptosis in macrophages. Plays a role in homeostasis of CD8+ subsets of intraepithelial lymphocytes (IELs) (CD8alphaalpha and CD8alphabeta IELs) in small intestine by supporting preferential migration of CD8alphaalpha T-cells to intraepithelial compartment over lamina propria compartment, and by mediating their reconstitution into small intestine after bone marrow transplant. Participates also in hypotensive responses, mediating reduction in intraocular and blood pressure. The sequence is that of N-arachidonyl glycine receptor (GPR18) from Bos taurus (Bovine).